The following is a 391-amino-acid chain: Elongation factor Tu (391 aa).

The tr-type G domain maps to 10-201; sequence KPHVNIGTIG…AVDEYIPTPA (192 aa). The interval 19–26 is G1; the sequence is GHVDHGKT. 19-26 is a binding site for GTP; sequence GHVDHGKT. Position 26 (T26) interacts with Mg(2+). The interval 55 to 59 is G2; the sequence is GITIS. Residues 76–79 are G3; that stretch reads DCPG. GTP contacts are provided by residues 76 to 80 and 131 to 134; these read DCPGH and NKVD. Residues 131-134 are G4; that stretch reads NKVD. The segment at 169-171 is G5; it reads SAL.

It belongs to the TRAFAC class translation factor GTPase superfamily. Classic translation factor GTPase family. EF-Tu/EF-1A subfamily. As to quaternary structure, monomer.

The protein localises to the cytoplasm. The catalysed reaction is GTP + H2O = GDP + phosphate + H(+). GTP hydrolase that promotes the GTP-dependent binding of aminoacyl-tRNA to the A-site of ribosomes during protein biosynthesis. In Cereibacter sphaeroides (strain ATCC 17029 / ATH 2.4.9) (Rhodobacter sphaeroides), this protein is Elongation factor Tu.